We begin with the raw amino-acid sequence, 366 residues long: Dof zinc finger protein DOF1.3 (366 aa).

The segment at 22–103 (DPYSSSSHVL…KTTELKKPDK (82 aa)) is disordered. Composition is skewed to low complexity over residues 25–45 (SSSSHVLPDSSSSSSSSSLSL) and 56–69 (TDNTSLKLSSNLNN). 2 stretches are compositionally biased toward basic and acidic residues: residues 70 to 83 (ESKETSENSDDQHS) and 91 to 103 (EEEKTTELKKPDK). The segment at 105-159 (LPCPRCNSADTKFCYYNNYNVNQPRHFCRKCQRYWTAGGSMRIVPVGSGRRKNKG) adopts a Dof-type zinc-finger fold. Cys107, Cys110, Cys132, and Cys135 together coordinate Zn(2+).

The protein resides in the nucleus. Transcription factor that binds specifically to a 5'-AA[AG]G-3' consensus core sequence. The chain is Dof zinc finger protein DOF1.3 (DOF1.3) from Arabidopsis thaliana (Mouse-ear cress).